The primary structure comprises 348 residues: NADH-ubiquinone oxidoreductase chain 2 (348 aa).

The next 10 membrane-spanning stretches (helical) occupy residues 1-21 (MSPYVTMILISSLGLGTTITF), 25-45 (SWLMAWMGLEINTLAITPLMV), 60-80 (FLTQATASGLLLFATLNNAWM), 93-115 (LSAPMITMALALKMGVAPMHFWL), 149-169 (LNTTTMTILGLTSTIIGGLGG), 177-197 (KVLAYSSIAHLGWMVIIIQYS), 200-220 (LALLNLLLYITMTSTAFLTLM), 239-259 (IATMTAMLALLALGGLPPLTG), 274-294 (NLPALATLMALSALLSLFFYL), and 326-346 (LAMLSIMTLMALPTTPTMVAI).

The protein belongs to the complex I subunit 2 family.

It is found in the mitochondrion inner membrane. The catalysed reaction is a ubiquinone + NADH + 5 H(+)(in) = a ubiquinol + NAD(+) + 4 H(+)(out). Its function is as follows. Core subunit of the mitochondrial membrane respiratory chain NADH dehydrogenase (Complex I) that is believed to belong to the minimal assembly required for catalysis. Complex I functions in the transfer of electrons from NADH to the respiratory chain. The immediate electron acceptor for the enzyme is believed to be ubiquinone. This chain is NADH-ubiquinone oxidoreductase chain 2 (MT-ND2), found in Latimeria chalumnae (Coelacanth).